Reading from the N-terminus, the 518-residue chain is Ankyrin repeat and SOCS box protein 3 (518 aa).

ANK repeat units lie at residues 9-38 (DTCSTVGLAAREGNVKVLRKLLKKGRSVDV), 42-71 (RGWMPIHEAAYHNSVECLQMLINADSSENY), 78-107 (EGFCALHLAASQGHWKIVQILLEAGADPNA), 111-140 (EETTPLFLAVENGQIDVLRLLLQHGANVNG), 145-174 (CGWNSLHQASFQENAEIIKLLLRKGANKEC), 178-207 (FGITPLFVAAQYGKLESLSILISSGANVNC), 211-240 (DKATPLFIAAQEGHTKCVELLLSSGADPDL), 246-275 (SWQLPIHAAAQMGHTKILDLLIPLTNRACD), 279-308 (NKVSPVYSAVFGGHEDCLEILLRNGYSPDA), 315-346 (GFSSPVCMAFQKDCEFFGIVNILLKYGAQINE), and 348-373 (HLAYCLKYEKFSIFRYFLRKGCSLGP). One can recognise an SOCS box domain in the interval 441–504 (MLSARASNAW…HNYLLYEDVL (64 aa)).

Belongs to the ankyrin SOCS box (ASB) family. In terms of assembly, interacts with ELOB and TNFRSF1B.

The protein localises to the cytoplasm. Its pathway is protein modification; protein ubiquitination. In terms of biological role, probable substrate-recognition component of a SCF-like ECS (Elongin-Cullin-SOCS-box protein) E3 ubiquitin-protein ligase complex which mediates the ubiquitination and subsequent proteasomal degradation of target proteins. Recognizes TNFRSF1B. Plays a role in the down-regulation of antiviral innate immunity by targeting MAVS for ubiquitin-proteasomal degradation. Also destabilizes TRAF6 by enhancing its 'Lys-48'-linked polyubiquitination. The protein is Ankyrin repeat and SOCS box protein 3 (ASB3) of Homo sapiens (Human).